The sequence spans 170 residues: Large ribosomal subunit protein uL22c (170 aa).

Belongs to the universal ribosomal protein uL22 family. As to quaternary structure, part of the 50S ribosomal subunit.

It is found in the plastid. The protein localises to the chloroplast. In terms of biological role, this protein binds specifically to 23S rRNA. Its function is as follows. The globular domain of the protein is located near the polypeptide exit tunnel on the outside of the subunit, while an extended beta-hairpin is found that lines the wall of the exit tunnel in the center of the 70S ribosome. The chain is Large ribosomal subunit protein uL22c (rpl22) from Nandina domestica (Heavenly bamboo).